The chain runs to 277 residues: Thymidylate synthase (277 aa).

R27 lines the dUMP pocket. H57 is a (6R)-5,10-methylene-5,6,7,8-tetrahydrofolate binding site. 132–133 (RR) is a dUMP binding site. C152 acts as the Nucleophile in catalysis. Residues 179–182 (RSAD), N190, and 220–222 (HIY) contribute to the dUMP site. Position 182 (D182) interacts with (6R)-5,10-methylene-5,6,7,8-tetrahydrofolate. Residue A276 coordinates (6R)-5,10-methylene-5,6,7,8-tetrahydrofolate.

It belongs to the thymidylate synthase family. Bacterial-type ThyA subfamily. Homodimer.

The protein resides in the cytoplasm. It carries out the reaction dUMP + (6R)-5,10-methylene-5,6,7,8-tetrahydrofolate = 7,8-dihydrofolate + dTMP. It participates in pyrimidine metabolism; dTTP biosynthesis. Functionally, catalyzes the reductive methylation of 2'-deoxyuridine-5'-monophosphate (dUMP) to 2'-deoxythymidine-5'-monophosphate (dTMP) while utilizing 5,10-methylenetetrahydrofolate (mTHF) as the methyl donor and reductant in the reaction, yielding dihydrofolate (DHF) as a by-product. This enzymatic reaction provides an intracellular de novo source of dTMP, an essential precursor for DNA biosynthesis. The sequence is that of Thymidylate synthase from Acidovorax sp. (strain JS42).